A 392-amino-acid polypeptide reads, in one-letter code: Protein-glutamate methylesterase/protein-glutamine glutaminase (392 aa).

Residues 9–126 (TVLIVDDSPF…GADIQALARD (118 aa)) enclose the Response regulatory domain. D60 is subject to 4-aspartylphosphate. The interval 148 to 194 (VSRISSASGSRPPWTAGAASENTNRLSSPGSTSSTLGSAKGRSLDSG) is disordered. Residues 173 to 185 (LSSPGSTSSTLGS) are compositionally biased toward low complexity. The CheB-type methylesterase domain occupies 198 to 392 (PKYPVEIVAI…RHIVECVQRR (195 aa)). Catalysis depends on residues S210, H237, and D334.

The protein belongs to the CheB family. Phosphorylated by CheA. Phosphorylation of the N-terminal regulatory domain activates the methylesterase activity.

The protein resides in the cytoplasm. It carries out the reaction [protein]-L-glutamate 5-O-methyl ester + H2O = L-glutamyl-[protein] + methanol + H(+). The enzyme catalyses L-glutaminyl-[protein] + H2O = L-glutamyl-[protein] + NH4(+). Its function is as follows. Involved in chemotaxis. Part of a chemotaxis signal transduction system that modulates chemotaxis in response to various stimuli. Catalyzes the demethylation of specific methylglutamate residues introduced into the chemoreceptors (methyl-accepting chemotaxis proteins or MCP) by CheR. Also mediates the irreversible deamidation of specific glutamine residues to glutamic acid. The polypeptide is Protein-glutamate methylesterase/protein-glutamine glutaminase (Desulfitobacterium hafniense (strain Y51)).